The primary structure comprises 170 residues: uncharacterized protein (170 aa).

This is an uncharacterized protein from Myxococcus xanthus.